Here is a 1906-residue protein sequence, read N- to C-terminus: Alpha-2-macroglobulin homolog (1906 aa).

An N-terminal signal peptide occupies residues 1-21 (MIIRVCIRCFIVLTLVLGIGG). Cys-22 carries N-palmitoyl cysteine lipidation. Cys-22 carries S-diacylglycerol cysteine lipidation.

It belongs to the protease inhibitor I39 (alpha-2-macroglobulin) family. Bacterial alpha-2-macroglobulin subfamily.

Its subcellular location is the cell membrane. The polypeptide is Alpha-2-macroglobulin homolog (Nostoc sp. (strain PCC 7120 / SAG 25.82 / UTEX 2576)).